We begin with the raw amino-acid sequence, 379 residues long: Cytochrome b (379 aa).

A run of 4 helical transmembrane segments spans residues 33-53, 77-98, 113-133, and 178-198; these read FGSL…FLAM, WLIR…FIHV, WNIG…GYVL, and FFAF…VHLL. Residues His83 and His97 each coordinate heme b. Positions 182 and 196 each coordinate heme b. His201 provides a ligand contact to a ubiquinone. The next 4 helical transmembrane spans lie at 226 to 246, 288 to 308, 320 to 340, and 347 to 367; these read IKDL…ALFF, LGGV…PLLN, VTQT…WIGG, and FTMI…VLMP.

This sequence belongs to the cytochrome b family. As to quaternary structure, the cytochrome bc1 complex contains 11 subunits: 3 respiratory subunits (MT-CYB, CYC1 and UQCRFS1), 2 core proteins (UQCRC1 and UQCRC2) and 6 low-molecular weight proteins (UQCRH/QCR6, UQCRB/QCR7, UQCRQ/QCR8, UQCR10/QCR9, UQCR11/QCR10 and a cleavage product of UQCRFS1). This cytochrome bc1 complex then forms a dimer. Requires heme b as cofactor.

Its subcellular location is the mitochondrion inner membrane. In terms of biological role, component of the ubiquinol-cytochrome c reductase complex (complex III or cytochrome b-c1 complex) that is part of the mitochondrial respiratory chain. The b-c1 complex mediates electron transfer from ubiquinol to cytochrome c. Contributes to the generation of a proton gradient across the mitochondrial membrane that is then used for ATP synthesis. The protein is Cytochrome b (MT-CYB) of Akodon iniscatus (Intelligent grass mouse).